The sequence spans 289 residues: uncharacterized protein (289 aa).

An N-terminal signal peptide occupies residues 1–19 (MAKWLGAPLARGVSTATRA). Transmembrane regions (helical) follow at residues 90 to 110 (GLLA…GWGV) and 257 to 277 (AALS…LVFA).

It is found in the cell membrane. This is an uncharacterized protein from Mycobacterium tuberculosis (strain CDC 1551 / Oshkosh).